The chain runs to 391 residues: Somatostatin receptor type 1 (391 aa).

The segment at 1 to 50 (MFPNGTAPSPTSSPSSSPGGCGEGVCSRGPGSGAADGMEEPGRNSSQNGT) is disordered. Over 1-56 (MFPNGTAPSPTSSPSSSPGGCGEGVCSRGPGSGAADGMEEPGRNSSQNGTLSEGQG) the chain is Extracellular. An N-linked (GlcNAc...) asparagine glycan is attached at Asn4. Residues 8 to 18 (PSPTSSPSSSP) are compositionally biased toward low complexity. N-linked (GlcNAc...) asparagine glycans are attached at residues Asn44 and Asn48. The helical transmembrane segment at 57 to 84 (SAILISFIYSVVCLVGLCGNSMVIYVIL) threads the bilayer. The Cytoplasmic segment spans residues 85–94 (RYAKMKTATN). Residues 95-120 (IYILNLAIADELLMLSVPFLVTSTLL) traverse the membrane as a helical segment. The Extracellular segment spans residues 121-131 (RHWPFGALLCR). A disulfide bridge connects residues Cys130 and Cys208. The chain crosses the membrane as a helical span at residues 132–153 (LVLSVDAVNMFTSIYCLTVLSV). Residues 154 to 175 (DRYVAVVHPIKAARYRRPTVAK) are Cytoplasmic-facing. A helical membrane pass occupies residues 176–196 (VVNLGVWVLSLLVILPIVVFS). The Extracellular segment spans residues 197-219 (RTAANSDGTVACNMLMPEPAQRW). The helical transmembrane segment at 220–244 (LVGFVLYTFLMGFLLPVGAICLCYV) threads the bilayer. Topologically, residues 245–270 (LIIAKMRMVALKAGWQQRKRSERKIT) are cytoplasmic. The helical transmembrane segment at 271–296 (LMVMMVVMVFVICWMPFYVVQLVNVF) threads the bilayer. Residues 297 to 303 (AEQDDAT) are Extracellular-facing. The chain crosses the membrane as a helical span at residues 304–327 (VSQLSVILGYANSCANPILYGFLS). Residues 328–391 (DNFKRSFQRI…GTCASRISTL (64 aa)) lie on the Cytoplasmic side of the membrane. The S-palmitoyl cysteine moiety is linked to residue Cys339.

Belongs to the G-protein coupled receptor 1 family. In terms of tissue distribution, brain, pituitary, islet, jejunum, stomach, heart, spleen.

Its subcellular location is the cell membrane. Functionally, receptor for somatostatin with higher affinity for somatostatin-14 than -28. This receptor is coupled to phosphotyrosine phosphatase and Na(+)/H(+) exchanger via pertussis toxin insensitive G proteins. The protein is Somatostatin receptor type 1 (Sstr1) of Rattus norvegicus (Rat).